A 362-amino-acid polypeptide reads, in one-letter code: Mannan endo-1,4-beta-mannosidase (362 aa).

The first 26 residues, 1 to 26, serve as a signal peptide directing secretion; sequence MFKKHTISLLIIFLLASAVLAKPIEA. Residues 38-349 form the GH26 domain; it reads QTTKTVMNWL…YHDSWTLNKG (312 aa). H131 provides a ligand contact to substrate. E193 functions as the Proton donor in the catalytic mechanism. Residues W198 and Y268 each contribute to the substrate site. E292 acts as the Nucleophile in catalysis. 324–325 provides a ligand contact to substrate; that stretch reads WN.

It belongs to the glycosyl hydrolase 26 family. In terms of assembly, homodimer.

It localises to the secreted. The catalysed reaction is Random hydrolysis of (1-&gt;4)-beta-D-mannosidic linkages in mannans, galactomannans and glucomannans.. In terms of biological role, involved in the degradation of glucomannan. Catalyzes the endo hydrolysis of beta-1,4-linked mannan, galactomannan and glucomannan. The sequence is that of Mannan endo-1,4-beta-mannosidase from Bacillus subtilis (strain 168).